Consider the following 141-residue polypeptide: Acetyltransferase YpeA (141 aa).

One can recognise an N-acetyltransferase domain in the interval 1–141; sequence MEIRVFRQED…GKRLIEDEEY (141 aa).

This sequence belongs to the acetyltransferase family. YpeA subfamily.

This chain is Acetyltransferase YpeA, found in Escherichia coli O157:H7.